The primary structure comprises 64 residues: Conotoxin VnMLCL-05 (64 aa).

The N-terminal stretch at 1–19 (MLCLPVFIILLLLASPAAP) is a signal peptide. Residues 20 to 43 (NPLQTRIQSNLIRAGPEDANIKTD) constitute a propeptide that is removed on maturation. Lysine 63 carries the post-translational modification Lysine amide.

This sequence belongs to the conotoxin T superfamily. In terms of tissue distribution, expressed by the venom duct.

Its subcellular location is the secreted. The polypeptide is Conotoxin VnMLCL-05 (Conus ventricosus (Mediterranean cone)).